A 76-amino-acid polypeptide reads, in one-letter code: Acyl carrier protein (76 aa).

The Carrier domain occupies M1–A76. An O-(pantetheine 4'-phosphoryl)serine modification is found at S36.

Belongs to the acyl carrier protein (ACP) family. In terms of processing, 4'-phosphopantetheine is transferred from CoA to a specific serine of apo-ACP by AcpS. This modification is essential for activity because fatty acids are bound in thioester linkage to the sulfhydryl of the prosthetic group.

Its subcellular location is the cytoplasm. The protein operates within lipid metabolism; fatty acid biosynthesis. Its function is as follows. Carrier of the growing fatty acid chain in fatty acid biosynthesis. The chain is Acyl carrier protein from Aliarcobacter butzleri (strain RM4018) (Arcobacter butzleri).